A 91-amino-acid chain; its full sequence is Small ribosomal subunit protein bS18 (91 aa).

The protein belongs to the bacterial ribosomal protein bS18 family. In terms of assembly, part of the 30S ribosomal subunit. Forms a tight heterodimer with protein bS6.

In terms of biological role, binds as a heterodimer with protein bS6 to the central domain of the 16S rRNA, where it helps stabilize the platform of the 30S subunit. This is Small ribosomal subunit protein bS18 from Burkholderia multivorans (strain ATCC 17616 / 249).